Here is a 358-residue protein sequence, read N- to C-terminus: MAEGERQPPPDSSEEAPPATQNFIIPKKEIHTVPDMGKWKRSQAYADYIGFILTLNEGVKGKKLTFEYRVSEMWNEVHEEKEQAAKQSVSCDECIPLPRAGHCAPSEAIEKLVALLNTLDRWIDETPPVDQPSRFGNKAYRTWYAKLDEEAENLVATVVPTHLAAAVPEVAVYLKESVGNSTRIDYGTGHEAAFAAFLCCLCKIGVLRVDDQIAIVFKVFNRYLEVMRKLQKTYRMEPAGSQGVWGLDDFQFLPFIWGSSQLIDHPYLEPRHFVDEKAVNENHKDYMFLECILFITEMKTGPFAEHSNQLWNISAVPSWSKVNQGLIRMYKAECLEKFPVIQHFKFGSLLPIHPVTSG.

The disordered stretch occupies residues 1–20 (MAEGERQPPPDSSEEAPPAT). At A2 the chain carries N-acetylalanine. ATP contacts are provided by R183, T188, and G189. Residues G243 and D249 each coordinate Mg(2+). P339, Q342, and H343 together coordinate ATP.

Belongs to the PTPA-type PPIase family. As to quaternary structure, associates with PP2A heterodimeric core enzyme PP2A(D), composed of a 36 kDa catalytic subunit (subunit C) and a 65 kDa constant regulatory subunit (PR65 or subunit A). Interacts with the catalytic subunit PPP2CA (via C-terminus). Interacts with PPP2CB. Widely expressed.

The protein resides in the cytoplasm. Its subcellular location is the nucleus. It catalyses the reaction [protein]-peptidylproline (omega=180) = [protein]-peptidylproline (omega=0). In terms of biological role, PPIases accelerate the folding of proteins. It catalyzes the cis-trans isomerization of proline imidic peptide bonds in oligopeptides. Acts as a regulatory subunit for serine/threonine-protein phosphatase 2A (PP2A). Modulates PP2A activity or substrate specificity, probably by inducing a conformational change in the catalytic subunit, a proposed direct target of the PPIase. Can reactivate inactive phosphatase PP2A-phosphatase methylesterase complexes (PP2A(i)) in presence of ATP and Mg(2+). Reversibly stimulates the variable phosphotyrosyl phosphatase activity of PP2A core heterodimer PP2A(D) in presence of ATP and Mg(2+) (in vitro). The phosphotyrosyl phosphatase activity is dependent of an ATPase activity of the PP2A(D):PPP2R4 complex. Is involved in apoptosis; the function appears to be independent from PP2A. In Homo sapiens (Human), this protein is Serine/threonine-protein phosphatase 2A activator.